The chain runs to 502 residues: MVGQRVRTRFAPSPTGYLHVGGLRTALYNYLFAKKMHGDFIIRIEDTDQTRKVEGAQQNLIKALEWAGIVADESPEKGGNYGPYVQSERLDLYGRYCQQLLDDQHAYYCFATHEELEENRQLQIKQGLQPKYNRKWLPEEMGGSMPPSVIRKKLDEGGPYVIRMKVPDYVSVWFEDIIRGPVEFDSATIDDQVLMKSDGFPTYHFASVIDDHLMEFTHIIRGEEWLSSMPKHLLLYEFFGWEPPKVAHLPLLLNADRSKLSKRQGDVAVEDYIRKGYSNDAIINFVAMLGWNEGEGSEQEVYSMEQLIEKFSLERVGKAGAVFNIDKLNWLEKQYIKNRPTEQLVPVIKPILLAELERKETMMPVDLITSEAYLEKVIELMRERVGFEHEFVTFSSYFFFEPDSYDEEAVKKRWAPDTNSLLQEFTEILATLEEFSAENIEAHLKEFVAPKGLKAAALIHPLRIVSSGVSFGPSLYHMLEVLGKETVLRRILKGREKITFSA.

The 'HIGH' region motif lies at 12 to 22; the sequence is PSPTGYLHVGG. A 'KMSKS' region motif is present at residues 259–263; that stretch reads KLSKR. Lys262 is a binding site for ATP.

This sequence belongs to the class-I aminoacyl-tRNA synthetase family. Glutamate--tRNA ligase type 1 subfamily. In terms of assembly, monomer.

Its subcellular location is the cytoplasm. It catalyses the reaction tRNA(Glu) + L-glutamate + ATP = L-glutamyl-tRNA(Glu) + AMP + diphosphate. Its function is as follows. Catalyzes the attachment of glutamate to tRNA(Glu) in a two-step reaction: glutamate is first activated by ATP to form Glu-AMP and then transferred to the acceptor end of tRNA(Glu). The sequence is that of Glutamate--tRNA ligase from Pelodictyon phaeoclathratiforme (strain DSM 5477 / BU-1).